The chain runs to 140 residues: Resuscitation-promoting factor RpfC (140 aa).

The first 31 residues, 1–31 (MTRIAKPLIKSAMAAGLVTASMSLSTAVAHA), serve as a signal peptide directing secretion.

This sequence belongs to the transglycosylase family. Rpf subfamily.

The protein resides in the secreted. Its function is as follows. Factor that stimulates resuscitation of dormant cells. Has peptidoglycan (PG) hydrolytic activity. In Mycobacterium tuberculosis (strain ATCC 35801 / TMC 107 / Erdman), this protein is Resuscitation-promoting factor RpfC (rpfC).